The chain runs to 229 residues: MKKITIAIDGYSSCGKSTMAKDLAREIGYIYIDSGAMYRAVTLYSLQKGFFTERGIDTEALKTAMPDIHISFRLNPETQRPMTFLNDTNVEDAIRSMEVSSHVSPIAALGFVREALVKQQQEMGKAKGIVMDGRDIGTVVFPDAELKIFVTASAAIRAQRRYDELRSKGQEASYEKILENVEERDRIDQTREVSPLRQADDAILLDNSHMSIAEQKKWLTEKFQAAING.

10–18 is an ATP binding site; sequence GYSSCGKST.

This sequence belongs to the cytidylate kinase family. Type 1 subfamily.

The protein localises to the cytoplasm. It carries out the reaction CMP + ATP = CDP + ADP. The catalysed reaction is dCMP + ATP = dCDP + ADP. The polypeptide is Cytidylate kinase (Phocaeicola vulgatus (strain ATCC 8482 / DSM 1447 / JCM 5826 / CCUG 4940 / NBRC 14291 / NCTC 11154) (Bacteroides vulgatus)).